The primary structure comprises 454 residues: UDP-glycosyltransferase 79A2 (454 aa).

Residues Ser269, 330–331, 348–356, and 370–373 each bind UDP-alpha-D-glucose; these read WV, HAGYGSVIE, and KVDQ.

This sequence belongs to the UDP-glycosyltransferase family.

Functionally, may glycosylate diterpenes or flavonols in leaves. In Stevia rebaudiana (Stevia), this protein is UDP-glycosyltransferase 79A2.